Consider the following 317-residue polypeptide: Transcription initiation factor IIB 3 (317 aa).

Over residues Met-1 to Glu-14 the composition is skewed to basic and acidic residues. A disordered region spans residues Met-1 to Cys-25. A TFIIB-type zinc finger spans residues Glu-21–Glu-50. The Zn(2+) site is built by Cys-25, Cys-28, Cys-42, and Cys-45. A disordered region spans residues Ala-62 to His-83. Repeat copies occupy residues Ser-136 to Leu-219 and Glu-230 to Glu-311.

Belongs to the TFIIB family.

Stabilizes TBP binding to an archaeal box-A promoter. Also responsible for recruiting RNA polymerase II to the pre-initiation complex (DNA-TBP-TFIIB). The sequence is that of Transcription initiation factor IIB 3 from Halobacterium salinarum (strain ATCC 700922 / JCM 11081 / NRC-1) (Halobacterium halobium).